The sequence spans 520 residues: Cytochrome P450 315a1, mitochondrial (520 aa).

Residue cysteine 466 coordinates heme.

It belongs to the cytochrome P450 family. Heme is required as a cofactor. As to expression, complex coexpression pattern of dib (disembodied) and sad (shade) in the early embryo that restricts to the prothoracic gland cells of the developing ring gland during late embryogenesis. In larvae and adult, coexpression is seen in prothoracic gland and follicle cells of the ovary. In adults, coexpression is seen in the follicle cells, sad only is expressed in nurse cells.

Its subcellular location is the mitochondrion membrane. The enzyme catalyses 2-deoxyecdysone + 2 reduced [adrenodoxin] + O2 + 2 H(+) = ecdysone + 2 oxidized [adrenodoxin] + H2O. It carries out the reaction 2,22-dideoxyecdysone + 2 reduced [adrenodoxin] + O2 + 2 H(+) = 22-deoxyecdysone + 2 oxidized [adrenodoxin] + H2O. Its pathway is steroid biosynthesis; ecdysteroid biosynthesis. Functionally, required for CNS development: midline glial cells. Involved in the metabolism of insect hormones: responsible for ecdysteroid C2-hydroxylase activity. May be involved in the breakdown of synthetic insecticides. In Drosophila melanogaster (Fruit fly), this protein is Cytochrome P450 315a1, mitochondrial.